A 161-amino-acid polypeptide reads, in one-letter code: Disulfide bond formation protein B (161 aa).

Over 1–8 the chain is Cytoplasmic; that stretch reads MQANSRAY. A helical membrane pass occupies residues 9 to 25; sequence FLLIAFISFGLVGFALY. Residues 26 to 43 are Periplasmic-facing; the sequence is LQFEKGYQPCPLCIMQRF. A disulfide bond links Cys35 and Cys38. A helical transmembrane segment spans residues 44-58; sequence AFIGIGLFSLLAVIA. Residues 59-63 are Cytoplasmic-facing; that stretch reads QNTRS. Residues 64–81 traverse the membrane as a helical segment; it reads LWQGLGMLSGVGGIAVAV. The Periplasmic segment spans residues 82 to 136; it reads YHVSLLLNPKASCGIDPLENWVNALPTAKVLPQVFYSDGLCTAPLPPVLGLSVPA. Cys94 and Cys122 are joined by a disulfide. The helical transmembrane segment at 137 to 155 threads the bilayer; that stretch reads WSLIWLFILTLTLAVGLIR. Over 156–161 the chain is Cytoplasmic; it reads REKNFR.

This sequence belongs to the DsbB family.

The protein resides in the cell inner membrane. Functionally, required for disulfide bond formation in some periplasmic proteins. Acts by oxidizing the DsbA protein. The chain is Disulfide bond formation protein B from Cupriavidus pinatubonensis (strain JMP 134 / LMG 1197) (Cupriavidus necator (strain JMP 134)).